Reading from the N-terminus, the 1232-residue chain is uncharacterized protein (1232 aa).

Belongs to the Mg-chelatase subunit H family.

This is an uncharacterized protein from Methanocaldococcus jannaschii (strain ATCC 43067 / DSM 2661 / JAL-1 / JCM 10045 / NBRC 100440) (Methanococcus jannaschii).